The sequence spans 172 residues: Thioredoxin M5, chloroplastic (172 aa).

The transit peptide at 1 to 59 (MALETCFRAWATLHAPQPPSSGGSRDRLLLSGAGSSQSKPRLSVASPSPLRPASRFACQ) directs the protein to the chloroplast. The interval 17 to 47 (QPPSSGGSRDRLLLSGAGSSQSKPRLSVASP) is disordered. The Thioredoxin domain occupies 60-171 (CSNVVDEVVV…LATIIDKYVS (112 aa)). Residues Cys-95 and Cys-98 each act as nucleophile in the active site. Residues Cys-95 and Cys-98 are joined by a disulfide bond.

It belongs to the thioredoxin family. Plant M-type subfamily. In terms of tissue distribution, expressed in leaves and at lower levels in flowers.

The protein resides in the plastid. Its subcellular location is the chloroplast. In terms of biological role, thiol-disulfide oxidoreductase probably involved in the redox regulation of chloroplastic enzymes. Required for chloroplast biogenesis and differentiation. Functions as an electron donor for plastidial 2-Cys peroxiredoxins and participates in hydrogen peroxide scavenging system in chloroplasts. Possesses reducing activity towards insulin disulfide bonds. This is Thioredoxin M5, chloroplastic (TRXM) from Oryza sativa subsp. japonica (Rice).